The primary structure comprises 85 residues: MAHKKAGGSTRNGRDSEAKRLGVKMYGGQAIKAGNIIVRQRGTQFHAGYGVGMGKDHTLFAKVEGVVKFEVKGAFGRRYVSVVAA.

Belongs to the bacterial ribosomal protein bL27 family.

This is Large ribosomal subunit protein bL27 from Stutzerimonas stutzeri (strain A1501) (Pseudomonas stutzeri).